The following is a 349-amino-acid chain: UDP-N-acetylenolpyruvoylglucosamine reductase (349 aa).

The region spanning 25–213 (VGPVARRLVT…VEQGERTDPQ (189 aa)) is the FAD-binding PCMH-type domain. Arginine 165 is a catalytic residue. Serine 242 serves as the catalytic Proton donor. The active site involves glutamate 341.

This sequence belongs to the MurB family. FAD is required as a cofactor.

Its subcellular location is the cytoplasm. It carries out the reaction UDP-N-acetyl-alpha-D-muramate + NADP(+) = UDP-N-acetyl-3-O-(1-carboxyvinyl)-alpha-D-glucosamine + NADPH + H(+). The protein operates within cell wall biogenesis; peptidoglycan biosynthesis. In terms of biological role, cell wall formation. The protein is UDP-N-acetylenolpyruvoylglucosamine reductase of Mycolicibacterium gilvum (strain PYR-GCK) (Mycobacterium gilvum (strain PYR-GCK)).